We begin with the raw amino-acid sequence, 426 residues long: Phosphomethylpyrimidine synthase (426 aa).

Substrate-binding positions include asparagine 66, methionine 95, tyrosine 124, histidine 163, serine 185–glycine 187, aspartate 226–arginine 229, and glutamate 265. Histidine 269 lines the Zn(2+) pocket. Tyrosine 292 serves as a coordination point for substrate. Histidine 333 lines the Zn(2+) pocket. Positions 407, 410, and 414 each coordinate [4Fe-4S] cluster.

Belongs to the ThiC family. [4Fe-4S] cluster is required as a cofactor.

It catalyses the reaction 5-amino-1-(5-phospho-beta-D-ribosyl)imidazole + S-adenosyl-L-methionine = 4-amino-2-methyl-5-(phosphooxymethyl)pyrimidine + CO + 5'-deoxyadenosine + formate + L-methionine + 3 H(+). Its pathway is cofactor biosynthesis; thiamine diphosphate biosynthesis. In terms of biological role, catalyzes the synthesis of the hydroxymethylpyrimidine phosphate (HMP-P) moiety of thiamine from aminoimidazole ribotide (AIR) in a radical S-adenosyl-L-methionine (SAM)-dependent reaction. The sequence is that of Phosphomethylpyrimidine synthase from Thermococcus gammatolerans (strain DSM 15229 / JCM 11827 / EJ3).